The following is a 73-amino-acid chain: Translational regulator CsrA (73 aa).

A disordered region spans residues 54–73; sequence ENRAASDSPWSPNSLPQLPV. The span at 61–73 shows a compositional bias: polar residues; that stretch reads SPWSPNSLPQLPV.

It belongs to the CsrA/RsmA family. Homodimer; the beta-strands of each monomer intercalate to form a hydrophobic core, while the alpha-helices form wings that extend away from the core.

The protein resides in the cytoplasm. Its function is as follows. A translational regulator that binds mRNA to regulate translation initiation and/or mRNA stability. Usually binds in the 5'-UTR at or near the Shine-Dalgarno sequence preventing ribosome-binding, thus repressing translation. Its main target seems to be the major flagellin gene, while its function is anatagonized by FliW. This chain is Translational regulator CsrA, found in Treponema pallidum (strain Nichols).